The chain runs to 279 residues: Shikimate dehydrogenase (NADP(+)) (279 aa).

Residues 21–23 (SMS) and Thr-68 each bind shikimate. The Proton acceptor role is filled by Lys-72. Residues Asn-93 and Asp-108 each coordinate shikimate. Residues 130–134 (GAGGA) and Leu-219 contribute to the NADP(+) site. Tyr-221 is a shikimate binding site. Gly-242 contributes to the NADP(+) binding site.

This sequence belongs to the shikimate dehydrogenase family. As to quaternary structure, homodimer.

The enzyme catalyses shikimate + NADP(+) = 3-dehydroshikimate + NADPH + H(+). It participates in metabolic intermediate biosynthesis; chorismate biosynthesis; chorismate from D-erythrose 4-phosphate and phosphoenolpyruvate: step 4/7. Functionally, involved in the biosynthesis of the chorismate, which leads to the biosynthesis of aromatic amino acids. Catalyzes the reversible NADPH linked reduction of 3-dehydroshikimate (DHSA) to yield shikimate (SA). This is Shikimate dehydrogenase (NADP(+)) from Oleidesulfovibrio alaskensis (strain ATCC BAA-1058 / DSM 17464 / G20) (Desulfovibrio alaskensis).